The primary structure comprises 195 residues: MADGQMPFSCHYPSRLRRDPSGLSLSSRLLDDGFGMDPFPDDLTASWPDWALPRLSSAWPGTLRSGMVPRGPTATARFGVPAEGRTPPPFPGEPWKVCVNVHSFKPEELMVKIKDGYVEVSGKHEEKQQEGGIVSKNFTKKIQLPAEVDPVTVFASLSPEGLLIIEAPQVPPYSTFGESSFNNELPQDSQEVTCT.

S56 bears the Phosphoserine mark. T62 carries the post-translational modification Phosphothreonine. 2 positions are modified to asymmetric dimethylarginine: R70 and R77. The sHSP domain maps to 73–184 (TATARFGVPA…TFGESSFNNE (112 aa)). The segment at 175–195 (TFGESSFNNELPQDSQEVTCT) is disordered. The segment covering 176-195 (FGESSFNNELPQDSQEVTCT) has biased composition (polar residues).

The protein belongs to the small heat shock protein (HSP20) family. As to quaternary structure, monomer. Forms a ternary complex with BAG3 and HSPA1A. Component of the chaperone-assisted selective autophagy (CASA) complex consisting of BAG3, HSPA8/HSC70, HSPB8 and STUB1/CHIP. Interacts with HSPB1. Interacts with DNAJB6. Interacts with BAG3. In terms of processing, phosphorylated.

It localises to the cytoplasm. It is found in the nucleus. In terms of biological role, involved in the chaperone-assisted selective autophagy (CASA), a crucial process for protein quality control, particularly in mechanical strained cells and tissues such as muscle. Displays temperature-dependent chaperone activity. The polypeptide is Heat shock protein beta-8 (HSPB8) (Macaca mulatta (Rhesus macaque)).